The primary structure comprises 545 residues: O-phosphoserine--tRNA(Cys) ligase (545 aa).

Substrate is bound by residues 189 to 191 (HMT), 234 to 236 (SAS), 276 to 277 (YY), and asparagine 328.

The protein belongs to the class-II aminoacyl-tRNA synthetase family. O-phosphoseryl-tRNA(Cys) synthetase subfamily. As to quaternary structure, homotetramer. Interacts with SepCysS.

The catalysed reaction is tRNA(Cys) + O-phospho-L-serine + ATP = O-phospho-L-seryl-tRNA(Cys) + AMP + diphosphate. Its function is as follows. Catalyzes the attachment of O-phosphoserine (Sep) to tRNA(Cys). The chain is O-phosphoserine--tRNA(Cys) ligase from Methanothrix thermoacetophila (strain DSM 6194 / JCM 14653 / NBRC 101360 / PT) (Methanosaeta thermophila).